Here is a 793-residue protein sequence, read N- to C-terminus: Toll-like receptor 2 type-1 (793 aa).

A signal peptide spans Met-1 to Ala-25. The Extracellular segment spans residues Ala-26 to Ser-597. A disulfide bond links Cys-41 and Cys-47. Residue Asn-48 is glycosylated (N-linked (GlcNAc...) asparagine). LRR repeat units lie at residues Lys-64 to Lys-85, Asn-88 to Ser-109, Lys-112 to Pro-133, Ser-136 to Ser-157, Asn-161 to Gly-182, and Phe-185 to Ser-206. N-linked (GlcNAc...) asparagine glycosylation is present at Asn-120. N-linked (GlcNAc...) asparagine glycans are attached at residues Asn-161, Asn-195, Asn-254, and Asn-325. An intrachain disulfide couples Cys-362 to Cys-391. LRR repeat units follow at residues Ser-370–Cys-391, Ser-397–Ile-418, Lys-423–Pro-444, Asn-446–Thr-467, Leu-468–Pro-486, Phe-487–Pro-508, and Asn-509–Ser-530. Asn-402 carries N-linked (GlcNAc...) asparagine glycosylation. A disulfide bridge connects residues Cys-441 and Cys-463. A glycan (N-linked (GlcNAc...) asparagine) is linked at Asn-451. Residues Asn-542–Arg-596 form the LRRCT domain. The helical transmembrane segment at Leu-598–Gly-618 threads the bilayer. Residues Tyr-619 to Ser-793 lie on the Cytoplasmic side of the membrane. Positions Ile-648–Leu-791 constitute a TIR domain.

It belongs to the Toll-like receptor family. As to quaternary structure, binds MYD88 (via TIR domain). Post-translationally, N-glycosylated. TLR2-1 is more heavily glycosylated than TLR2-2. As to expression, highly expressed in ovary. Detected at lower levels in heart, lung, gizzard and testis.

The protein localises to the membrane. Functionally, participates in the innate immune response to microbial agents. Acts via MYD88 and TRAF6, leading to NF-kappa-B activation, cytokine secretion and the inflammatory response. Does not respond to LPS and responds with less ability than TLR2-2 to mycoplasmal macrophage-activating lipopeptide-2kD (MALP-2). This chain is Toll-like receptor 2 type-1 (TLR2-1), found in Gallus gallus (Chicken).